Reading from the N-terminus, the 85-residue chain is Large ribosomal subunit protein bL27 (85 aa).

Positions 1–24 (MAHKKGQGSSRNGRDSNAQRRGVK) are disordered.

The protein belongs to the bacterial ribosomal protein bL27 family.

The polypeptide is Large ribosomal subunit protein bL27 (Syntrophus aciditrophicus (strain SB)).